A 195-amino-acid chain; its full sequence is Cell division protein SepF (195 aa).

The interval 32 to 54 is disordered; it reads RYSKTNSSETLAPEEEEPIRNRR.

Belongs to the SepF family. In terms of assembly, homodimer. Interacts with FtsZ.

The protein localises to the cytoplasm. Functionally, cell division protein that is part of the divisome complex and is recruited early to the Z-ring. Probably stimulates Z-ring formation, perhaps through the cross-linking of FtsZ protofilaments. Its function overlaps with FtsA. The polypeptide is Cell division protein SepF (Gloeothece citriformis (strain PCC 7424) (Cyanothece sp. (strain PCC 7424))).